The chain runs to 1442 residues: ABC transporter G family member 35 (1442 aa).

One can recognise an ABC transporter 1 domain in the interval 169 to 442 (LGMIGIRLAK…FESFGFKCPE (274 aa)). 202-209 (GPPSSGKT) serves as a coordination point for ATP. One can recognise an ABC transmembrane type-2 1 domain in the interval 520–733 (ELLKSCWDKE…AFNAITVNEL (214 aa)). A run of 7 helical transmembrane segments spans residues 538-558 (FFYV…STLY), 573-593 (IYVG…LAEM), 619-639 (LPTF…WMVV), 657-677 (FLII…IAST), 683-703 (IANT…GFLL), 714-734 (WAYW…NELF), and 769-789 (IGVG…TLAL). The region spanning 840–1092 (MSFDDVKYFV…KVVEYFESFP (253 aa)) is the ABC transporter 2 domain. 885–892 (GVSGAGKT) serves as a coordination point for ATP. In terms of domain architecture, ABC transmembrane type-2 2 spans 1165-1379 (GQFKSCLWKQ…TIYGLITSQY (215 aa)). Helical transmembrane passes span 1186–1206 (LVRF…FWQI), 1218–1238 (MVIG…CSTV), 1272–1292 (LPYV…MVGF), 1299–1319 (FLWF…YGMM), 1329–1349 (VASI…GFFI), 1357–1377 (WWVW…LITS), and 1414–1434 (PVAG…AFCI).

This sequence belongs to the ABC transporter superfamily. ABCG family. PDR (TC 3.A.1.205) subfamily. Ubiquitous with higher levels in roots.

The protein resides in the membrane. May be a general defense protein. This is ABC transporter G family member 35 (ABCG35) from Arabidopsis thaliana (Mouse-ear cress).